Reading from the N-terminus, the 1533-residue chain is Protein TALPID3 (1533 aa).

The tract at residues 32–57 is disordered; it reads LSANKRLPVGTGTSLNGTSRGSSDLT. Residues 42 to 57 are compositionally biased toward polar residues; sequence TGTSLNGTSRGSSDLT. Residues 182–223 adopt a coiled-coil conformation; the sequence is QSDLEAKVNSVTELLSKLQETDKHLQRVTEQQTSIQRKQEKL. Residues 309-321 are compositionally biased toward basic and acidic residues; that stretch reads KEVEDTSFDKQKS. Disordered stretches follow at residues 309–339 and 377–400; these read KEVEDTSFDKQKSPLETPAPRRFAPVPVSRD and LTRKSESSNTTSLTRSKIGWTPEK. A Phosphoserine modification is found at Ser-406. Residues 467–501 are a coiled coil; it reads SVLKDAEKILRGVQNNKKVLEENLEAIIRAKDGAA. The segment at 467-554 is required for centrosomal localization; that stretch reads SVLKDAEKIL…YEQKRFDQKN (88 aa). The tract at residues 546–575 is disordered; sequence EQKRFDQKNQRTKKGQNMTKDIRTNTQDKT. Residues 560-575 show a composition bias toward polar residues; it reads GQNMTKDIRTNTQDKT. Residues Thr-1042 and Thr-1046 each carry the phosphothreonine modification. Ser-1050 carries the phosphoserine modification. Position 1063 is a phosphothreonine (Thr-1063). At Ser-1066 the chain carries Phosphoserine. A disordered region spans residues 1129–1156; sequence SSPELPKPWGDGDLPLEEENPNSPQEEL.

This sequence belongs to the TALPID3 family. In terms of assembly, interacts with CCP110, CEP290, CEP97, KIF24. In terms of tissue distribution, ubiquitously expressed. Expressed in photoreceptor cells (at protein level).

Its subcellular location is the cytoplasm. The protein resides in the cytoskeleton. It localises to the microtubule organizing center. It is found in the centrosome. The protein localises to the photoreceptor inner segment. Its subcellular location is the centriole. The protein resides in the cilium basal body. Functionally, required for ciliogenesis and sonic hedgehog/SHH signaling. Required for the centrosomal recruitment of RAB8A and for the targeting of centriole satellite proteins to centrosomes such as of PCM1. May play a role in early ciliogenesis in the disappearance of centriolar satellites that preceeds ciliary vesicle formation. Involved in regulation of cell intracellular organization. Involved in regulation of cell polarity. Required for asymmetrical localization of CEP120 to daughter centrioles. The sequence is that of Protein TALPID3 (KIAA0586) from Homo sapiens (Human).